The primary structure comprises 421 residues: MEF2-activating motif and SAP domain-containing transcriptional regulator (421 aa).

Residues 12-28 (IIRSKFRSVLQLRIHRR) carry the MEF2-binding motif. 3 disordered regions span residues 104–156 (PPEQ…PPSH), 188–296 (KAML…ASLT), and 322–406 (DQVE…ADLS). An SAP domain is found at 165–199 (LEELTVSELRQQLRLRGLPVSGTKAMLLERMRGGT). Residues 191–214 (LLERMRGGTPPRERPKPRREDKEA) are compositionally biased toward basic and acidic residues. Residues 208 to 421 (RREDKEAAAP…LLWELLPDPW (214 aa)) form a transcription activation region. Residues 230-241 (RLPSTVKASATN) are compositionally biased toward polar residues. Residues 260–292 (ASVPAPTPSPALAPTPTPAPVPAPAPAPFPTPP) show a composition bias toward pro residues. The span at 347 to 372 (SPDSEGFSSVFSSSLPSPTSSLSPSP) shows a compositional bias: low complexity.

In terms of assembly, interacts with MEF2C. Expressed in skeletal muscle, brain, placenta and spleen.

It is found in the nucleus. Its function is as follows. Transcriptional coactivator. Stimulates the transcriptional activity of MEF2C. Stimulates MYOD1 activity in part via MEF2, resulting in an enhancement of skeletal muscle differentiation. The protein is MEF2-activating motif and SAP domain-containing transcriptional regulator (Mamstr) of Mus musculus (Mouse).